Here is a 288-residue protein sequence, read N- to C-terminus: Phytanoyl-CoA dioxygenase domain-containing protein 1 homolog (288 aa).

2-oxoglutarate is bound by residues Lys-95, Met-134, His-149–Asp-151, and Trp-167. Residues His-149 and Asp-151 each contribute to the Fe cation site. Fe cation is bound at residue His-242. 2-oxoglutarate is bound by residues Ser-244 and Arg-253.

It belongs to the PhyH family. PHYHD1 subfamily. Fe cation is required as a cofactor.

Functionally, has alpha-ketoglutarate-dependent dioxygenase activity. Does not show detectable activity towards fatty acid CoA thioesters. Is not expected to be active with phytanoyl CoA. In Caenorhabditis elegans, this protein is Phytanoyl-CoA dioxygenase domain-containing protein 1 homolog.